The chain runs to 998 residues: MTLKVILGEHQITRTELLVGIATVSGCGAVVYCISKFWGYGAIAPYPQSGGNRVTRALQRAVIDKTKTPIETRFYPLDSLRTVTPKRVADNGHAVSGAVRDAARRLIDESITAVGGSKFEVNPNPNSSTGLRNHFHFAVGDLAQDFRNDTPADDAFIVGVDVDYYVTEPDVLLEHMRPVVLHTFNPKKVSGFDADSPFTIKNNLVEYKVSGGAAWVHPVWDWCEAGEFIASRVRTSWKEWFLQLPLRMIGLEKVGYHKIHHCRPWTDCPDRALVYTIPQYVIWRFNWIDTELHVRKLKRIEYQDETKPGWNRLEYVTDKNELLVSIGREGEHAQITIEKEKLDMLSGLSATQSVNARLIGMGHKDPQYTSMIVQYYTGKKVVSPISPTVYKPTMPRVHWPVTSDADVPEVSARQYTLPIVSDCMMMPMIKRWETMSESIERRVTFVANDKKPSDRIAKIAETFVKLMNGPFKDLDPLSIEETIERLNKPSQQLQLRAVFEMIGVKPRQLIESFNKNEPGMKSSRIISGFPDILFILKVSRYTLAYSDIVLHAEHNEHWYYPGRNPTEIADGVCEFVSDCDAEVIETDFSNLDGRVSSWMQRNIAQKAMVQAFRPEYRDEIISFMDTIINCPAKAKRFGFRYEPGVGVKSGSPTTTPHNTQYNGCVEFTALTFEHPDAEPEDLFRLIGPKCGDDGLSRAIIQKSINRAAKCFGLELKVERYNPEIGLCFLSRVFVDPLATTTTIQDPLRTLRKLHLTTRDPTIPLADAACDRVEGYLCTDALTPLISDYCKMVLRLYGPTASTEQVRNQRRSRNKEKPYWLTCDGSWPQHPQDAHLMKQVLIKRTAIDEDQVDALIGRFAAMKDVWEKITHDSEESAAACTFDEDGVAPNSVDESLPMLNDAKQTRANPGTSRPHSNGGGSSHGNELPRRTEQRAQGPRQPARLPKQGKTNGKSDGNITAGETQRGGIPRGKGPRGGKTNTRRTPPKAGAQPQPSNNRK.

2 interaction with host mitochondria outer membrane regions span residues 1-67 (MTLK…DKTK) and 233-250 (VRTS…RMIG). Residues 1–400 (MTLKVILGEH…KPTMPRVHWP (400 aa)) form a homomultimerization region. Residues 17–34 (LLVGIATVSGCGAVVYCI) traverse the membrane as a helical segment. The interval 35–998 (SKFWGYGAIA…AQPQPSNNRK (964 aa)) is cytoplasmic. Residues 91-282 (NGHAVSGAVR…LVYTIPQYVI (192 aa)) form a capping region. The active-site For RdRp/TNTase activity is the D692. A homomultimerization region spans residues 700-800 (IQKSINRAAK…MVLRLYGPTA (101 aa)). Positions 901–998 (AKQTRANPGT…AQPQPSNNRK (98 aa)) are disordered. Polar residues-rich tracts occupy residues 904–913 (TRANPGTSRP) and 947–961 (GKTN…TAGE). Residues 971 to 984 (KGPRGGKTNTRRTP) show a composition bias toward basic residues.

Belongs to the nodaviridae RNA polymerase family. As to quaternary structure, homododecamer. Forms 2 stacked rings of 35-nm in diameter, arranged in a crown-like structure at the opening of virus-induced replication vesicles. Interacts with protein B2. Requires Mn(2+) as cofactor.

Its subcellular location is the host mitochondrion outer membrane. It carries out the reaction RNA(n) + a ribonucleoside 5'-triphosphate = RNA(n+1) + diphosphate. With respect to regulation, drastically inhibited by phosphonoacetic acid. Only slightly inhibited by gliotoxin. Functionally, RNA-dependent RNA polymerase, which replicates the viral genome composed of 2 RNA segments, RNA1 and RNA2. Does not need an exogenous primer. Also possesses a terminal nucleotidyl transferase (TNTase) activity. The TNTase catalyzes the addition of nucleotide to the 3'-end of plus- and minus-stranded RNAs, probably to repair the 3'-end nucleotide loss. Forms the open necked connection to the cytosol of the virus-induced replication vesicles. Mediates viral RNA1 recruitment. The polypeptide is RNA-directed RNA polymerase (Costelytra zealandica (Greater wax moth)).